The primary structure comprises 89 residues: Small ribosomal subunit protein bS16 (89 aa).

It belongs to the bacterial ribosomal protein bS16 family.

The protein is Small ribosomal subunit protein bS16 of Desulforamulus reducens (strain ATCC BAA-1160 / DSM 100696 / MI-1) (Desulfotomaculum reducens).